Reading from the N-terminus, the 397-residue chain is MTLLDPFFGEFGGMYSPQILMPVLLELEKAFVDAKDDPEFQAEFQHLLTEYAGRPTPLTLCRNLTKGTKTKIYLKREDLLHGGAHKTNQVLGQALLAKRMGKTRIIAETGAGQHGVATALACALLDLPCRIYMGAVDCERQKPNVFRMRLMGAEVIPVHAGSSTLKDACNEAMRDWTANYKDTHYILGTAAGPHPFPTIVREFQRMIGEEAKEQILKAEGRLPDAVVACVGGGSNAIGMFATFIEEEGVRLIGVEPAGHGIETGKHGAPIGHARKGIYLGMVSFLMQNEDGQVEESHSISAGLDFPSVGPQHAYLSSIGRAQYPSVTDQEALDAFQELSLREGIIPALESSHALAHALKMARSEPEKEQILIVNLSGRGDKDIFTVANALEGEGALS.

The residue at position 86 (Lys86) is an N6-(pyridoxal phosphate)lysine.

Belongs to the TrpB family. In terms of assembly, tetramer of two alpha and two beta chains. Requires pyridoxal 5'-phosphate as cofactor.

The catalysed reaction is (1S,2R)-1-C-(indol-3-yl)glycerol 3-phosphate + L-serine = D-glyceraldehyde 3-phosphate + L-tryptophan + H2O. It functions in the pathway amino-acid biosynthesis; L-tryptophan biosynthesis; L-tryptophan from chorismate: step 5/5. Its function is as follows. The beta subunit is responsible for the synthesis of L-tryptophan from indole and L-serine. This Tolumonas auensis (strain DSM 9187 / NBRC 110442 / TA 4) protein is Tryptophan synthase beta chain.